A 491-amino-acid polypeptide reads, in one-letter code: Endoglucanase 14 (491 aa).

The signal sequence occupies residues 1-31 (MSQLKIGSSQCLWTSICIVLFVLSMARGAVS). Aspartate 86 serves as the catalytic Nucleophile. N-linked (GlcNAc...) asparagine glycosylation is present at asparagine 397. Active-site residues include histidine 413, aspartate 465, and glutamate 474.

It belongs to the glycosyl hydrolase 9 (cellulase E) family.

It is found in the secreted. It carries out the reaction Endohydrolysis of (1-&gt;4)-beta-D-glucosidic linkages in cellulose, lichenin and cereal beta-D-glucans.. This chain is Endoglucanase 14, found in Arabidopsis thaliana (Mouse-ear cress).